A 219-amino-acid chain; its full sequence is C-type lectin domain family 4 member E (219 aa).

Residues 1-19 (MNSSKSSETQCTERGCFSS) are Cytoplasmic-facing. The chain crosses the membrane as a helical; Signal-anchor for type II membrane protein span at residues 20–40 (QMFLWTVAGIPILFLSACFIT). Over 41 to 219 (RCVVTFRIFQ…INPLNKGKSL (179 aa)) the chain is Extracellular. An N-linked (GlcNAc...) asparagine glycan is attached at Asn-62. Cys-80 and Cys-91 are joined by a disulfide. Positions 87-206 (FQSSCYFFST…CFLNYFRICE (120 aa)) constitute a C-type lectin domain. A glycan (N-linked (GlcNAc...) asparagine) is linked at Asn-107. 2 cysteine pairs are disulfide-bonded: Cys-108–Cys-205 and Cys-179–Cys-197. Residues Val-117, Asn-119, Glu-123, Glu-169, Asn-171, Asn-193, Asp-194, and Glu-206 each contribute to the Ca(2+) site. The short motif at 169–171 (EPN) is the Confers specificity for glucose/mannose-type carbohydrates element.

In terms of assembly, monomer and homodimer. Interacts with signaling adapter Fc receptor gamma chain/FCER1G to form a functional complex; the interaction is direct. Alternatively, acts as a bridge for interaction between CLEC4D and FCER1G. A heterodimer of CLEC4E and CLEC4D associates with FCER1G to form a functional complex. Interacts with SAP130 nuclear protein that is released from necrotic cells; the interaction is direct. As to expression, expressed in monocytes and macrophages.

The protein resides in the cell membrane. Its subcellular location is the cell projection. It localises to the phagocytic cup. Its function is as follows. Calcium-dependent lectin that acts as a pattern recognition receptor (PRR) of the innate immune system: recognizes damage-associated molecular patterns (DAMPs) of abnormal self and pathogen-associated molecular patterns (PAMPs) of bacteria and fungi. The PAMPs notably include mycobacterial trehalose 6,6'-dimycolate (TDM), a cell wall glycolipid with potent adjuvant immunomodulatory functions. Interacts with signaling adapter Fc receptor gamma chain/FCER1G to form a functional complex in myeloid cells. Binding of mycobacterial trehalose 6,6'-dimycolate (TDM) to this receptor complex leads to phosphorylation of the immunoreceptor tyrosine-based activation motif (ITAM) of FCER1G, triggering activation of SYK, CARD9 and NF-kappa-B, consequently driving maturation of antigen-presenting cells and shaping antigen-specific priming of T-cells toward effector T-helper 1 and T-helper 17 cell subtypes. Also recognizes alpha-mannose residues on pathogenic fungi of the genus Malassezia and mediates macrophage activation. Through recognition of DAMPs released upon nonhomeostatic cell death, enables immune sensing of damaged self and promotes inflammatory cell infiltration into the damaged tissue. In Homo sapiens (Human), this protein is C-type lectin domain family 4 member E.